Here is a 195-residue protein sequence, read N- to C-terminus: Putative L(+)-tartrate dehydratase subunit beta (195 aa).

The active site involves H36. Position 104 (K104) interacts with substrate.

It belongs to the class-I fumarase family. As to quaternary structure, heterotetramer of two alpha and two beta subunits.

The enzyme catalyses (2R,3R)-tartrate = oxaloacetate + H2O. In Methanocaldococcus jannaschii (strain ATCC 43067 / DSM 2661 / JAL-1 / JCM 10045 / NBRC 100440) (Methanococcus jannaschii), this protein is Putative L(+)-tartrate dehydratase subunit beta.